A 487-amino-acid chain; its full sequence is UDP-N-acetylmuramate--L-alanine ligase (487 aa).

130–136 is a binding site for ATP; it reads GTHGKTT.

It belongs to the MurCDEF family.

It localises to the cytoplasm. The catalysed reaction is UDP-N-acetyl-alpha-D-muramate + L-alanine + ATP = UDP-N-acetyl-alpha-D-muramoyl-L-alanine + ADP + phosphate + H(+). The protein operates within cell wall biogenesis; peptidoglycan biosynthesis. Its function is as follows. Cell wall formation. The polypeptide is UDP-N-acetylmuramate--L-alanine ligase (Photobacterium profundum (strain SS9)).